The following is a 442-amino-acid chain: Trigger factor (442 aa).

The region spanning Gly-176–Pro-259 is the PPIase FKBP-type domain.

This sequence belongs to the FKBP-type PPIase family. Tig subfamily.

It localises to the cytoplasm. The catalysed reaction is [protein]-peptidylproline (omega=180) = [protein]-peptidylproline (omega=0). Functionally, involved in protein export. Acts as a chaperone by maintaining the newly synthesized protein in an open conformation. Functions as a peptidyl-prolyl cis-trans isomerase. This Chlamydia trachomatis serovar D (strain ATCC VR-885 / DSM 19411 / UW-3/Cx) protein is Trigger factor (tig).